We begin with the raw amino-acid sequence, 1313 residues long: Mitogen-activated protein kinase kinase kinase 15 (1313 aa).

The interval 1 to 58 (MESGGGNAPAGALGAASESPQCPPPPGVEGAAGPAEPDGAAEGAAGGSGEGESGGGPR) is disordered. Positions 28 to 43 (VEGAAGPAEPDGAAEG) are enriched in low complexity. Gly residues predominate over residues 44–57 (AAGGSGEGESGGGP). Residues 652 to 908 (NGERVVLGKG…TAELLREGFL (257 aa)) form the Protein kinase domain. ATP is bound by residues 658-666 (LGKGTYGIV) and lysine 681. Aspartate 773 acts as the Proton acceptor in catalysis. Residues 939–958 (EPMATSSSEHGSVSPDSDAQ) are disordered. Residues 942 to 955 (ATSSSEHGSVSPDS) show a composition bias toward polar residues. Serine 994 carries the post-translational modification Phosphoserine. Positions 1179–1225 (QLGELRQETNRLLEHLVEKEREYQNLLRQTLEQKTQELYHLQLKLKS) form a coiled coil.

The protein belongs to the protein kinase superfamily. STE Ser/Thr protein kinase family. MAP kinase kinase kinase subfamily. Requires Mg(2+) as cofactor. In terms of tissue distribution, isoform 2 and isoform 3 are widely expressed. Isoform 2 highest levels are observed in fetal brain, and isoform 3 highest levels in pancreas, peripheral blood leukocytes, fetal brain and spleen.

It catalyses the reaction L-seryl-[protein] + ATP = O-phospho-L-seryl-[protein] + ADP + H(+). The enzyme catalyses L-threonyl-[protein] + ATP = O-phospho-L-threonyl-[protein] + ADP + H(+). Its activity is regulated as follows. Contains an N-terminal autoinhibitory domain. Activated by phosphorylation at Thr-812, inhibited by phosphorylation at Ser-924 and Ser-994. In terms of biological role, serine/threonine kinase which acts as a component of the MAP kinase signal transduction pathway. Once activated, acts as an upstream activator of the p38 MAPK signal transduction cascade through the phosphorylation and activation of several MAP kinase kinases. May function in a signal transduction pathway that is activated by various cell stresses and leads to apoptosis. Involved in phosphorylation of WNK4 in response to osmotic stress or hypotonic low-chloride stimulation via the p38 MAPK signal transduction cascade. This Homo sapiens (Human) protein is Mitogen-activated protein kinase kinase kinase 15 (MAP3K15).